Here is a 404-residue protein sequence, read N- to C-terminus: MSAPTFAEDPVTQRPALQSADFRLTVRQNPERARVAGGKEKERKAVDPPPIIQLKIDESKDPGQNYLQSPFYFMCCTLYNATEDTPATTAQSTALAGTLVSSLHRLKDTDNMEGGFFVFGDLSVKIEGEFRLKFNLFEMREVKRCGGSRDEVVYIKSILSKPFTVLPPKNFPGMTESTWLSRSFADQGVKLRIRKEARTLLKRPLNRAEPDYPAPPTQPRTPERSGASSQQMVAAYQTNRDYPFYNGPDAKRPRSSVDMSGRGLYEGDARYSYPPHAANPYQGQTYQQGMMQGYPTAGAGVSDYAIRQAQQGSTPTPFGSADESIGSIRSPGAGGYIGQPRYQSYSGAQMPYNLASSTQMSQMGESTPGRTGQAANMGGIVSGQSFSQSAGHMQSPSQVPPAWG.

Disordered regions lie at residues 1 to 46 (MSAP…RKAV), 200 to 231 (LLKR…SSQQ), and 382 to 404 (SGQS…PAWG). One can recognise a Velvet domain in the interval 17–194 (LQSADFRLTV…ADQGVKLRIR (178 aa)). A compositionally biased stretch (basic and acidic residues) spans 29 to 46 (NPERARVAGGKEKERKAV). Polar residues predominate over residues 382–397 (SGQSFSQSAGHMQSPS).

Belongs to the velvet family. VosA subfamily. As to quaternary structure, forms a heterodimeric complex with RYP3; the formation of the RYP2-RYP3 complex is light-dependent.

It localises to the nucleus. Component of the RYP2-RYP3 heterodimeric complex that plays a dual role in activating genes associated with spore maturation and repressing certain development-associated genes. The complex binds DNA through the DNA-binding domain of vosA that recognizes an 11-nucleotide consensus sequence 5'-CTGGCCGCGGC-3' consisting of two motifs in the promoters of key developmental regulatory genes. Required for viable spore production and regulation of sporulation in response to temperature and for the switch to yeast-form in the presence of host cells. This chain is Spore development regulator RYP2, found in Ajellomyces capsulatus (Darling's disease fungus).